We begin with the raw amino-acid sequence, 321 residues long: Glutaminase (321 aa).

Substrate is bound by residues serine 69, asparagine 120, glutamate 165, asparagine 172, tyrosine 196, tyrosine 248, and valine 266.

Belongs to the glutaminase family. Homotetramer.

It catalyses the reaction L-glutamine + H2O = L-glutamate + NH4(+). This Bacteroides fragilis (strain YCH46) protein is Glutaminase.